Consider the following 265-residue polypeptide: ATP synthase subunit a (265 aa).

5 helical membrane-spanning segments follow: residues 25–45 (FWAV…LFLW), 88–108 (IAPL…MDLI), 142–162 (DLNT…IYSI), 207–227 (LFGN…IGFW), and 233–253 (FAWA…FMML).

It belongs to the ATPase A chain family. F-type ATPases have 2 components, CF(1) - the catalytic core - and CF(0) - the membrane proton channel. CF(1) has five subunits: alpha(3), beta(3), gamma(1), delta(1), epsilon(1). CF(0) has three main subunits: a(1), b(2) and c(9-12). The alpha and beta chains form an alternating ring which encloses part of the gamma chain. CF(1) is attached to CF(0) by a central stalk formed by the gamma and epsilon chains, while a peripheral stalk is formed by the delta and b chains.

Its subcellular location is the cell inner membrane. In terms of biological role, key component of the proton channel; it plays a direct role in the translocation of protons across the membrane. This is ATP synthase subunit a from Idiomarina loihiensis (strain ATCC BAA-735 / DSM 15497 / L2-TR).